The following is a 262-amino-acid chain: 5'-nucleotidase SurE (262 aa).

A divalent metal cation contacts are provided by aspartate 8, aspartate 9, serine 40, and asparagine 92.

This sequence belongs to the SurE nucleotidase family. Requires a divalent metal cation as cofactor.

It is found in the cytoplasm. It catalyses the reaction a ribonucleoside 5'-phosphate + H2O = a ribonucleoside + phosphate. In terms of biological role, nucleotidase that shows phosphatase activity on nucleoside 5'-monophosphates. In Xylella fastidiosa (strain M23), this protein is 5'-nucleotidase SurE.